The chain runs to 305 residues: Acetaldehyde dehydrogenase (305 aa).

An NAD(+)-binding site is contributed by 13–16 (SGNI). Cys128 (acyl-thioester intermediate) is an active-site residue. Residues 159–167 (SAGPGTRQN) and Asn278 contribute to the NAD(+) site.

This sequence belongs to the acetaldehyde dehydrogenase family.

The enzyme catalyses acetaldehyde + NAD(+) + CoA = acetyl-CoA + NADH + H(+). This Roseiflexus castenholzii (strain DSM 13941 / HLO8) protein is Acetaldehyde dehydrogenase.